The sequence spans 184 residues: ATP synthase subunit delta (184 aa).

This sequence belongs to the ATPase delta chain family. F-type ATPases have 2 components, F(1) - the catalytic core - and F(0) - the membrane proton channel. F(1) has five subunits: alpha(3), beta(3), gamma(1), delta(1), epsilon(1). F(0) has three main subunits: a(1), b(2) and c(10-14). The alpha and beta chains form an alternating ring which encloses part of the gamma chain. F(1) is attached to F(0) by a central stalk formed by the gamma and epsilon chains, while a peripheral stalk is formed by the delta and b chains.

The protein resides in the cell membrane. Its function is as follows. F(1)F(0) ATP synthase produces ATP from ADP in the presence of a proton or sodium gradient. F-type ATPases consist of two structural domains, F(1) containing the extramembraneous catalytic core and F(0) containing the membrane proton channel, linked together by a central stalk and a peripheral stalk. During catalysis, ATP synthesis in the catalytic domain of F(1) is coupled via a rotary mechanism of the central stalk subunits to proton translocation. Functionally, this protein is part of the stalk that links CF(0) to CF(1). It either transmits conformational changes from CF(0) to CF(1) or is implicated in proton conduction. The polypeptide is ATP synthase subunit delta (Bacillus licheniformis (strain ATCC 14580 / DSM 13 / JCM 2505 / CCUG 7422 / NBRC 12200 / NCIMB 9375 / NCTC 10341 / NRRL NRS-1264 / Gibson 46)).